Consider the following 989-residue polypeptide: Autotransporter adhesin/invasin TibA (989 aa).

The N-terminal stretch at 1–54 is a signal peptide; it reads MNKVYNTVWNESTGTWVVTSELTRKGGLRPRQIKRTVLAGLIAGLLMPSMPALA. O-alpha-linked (D-glycero-D-manno-heptose) serine glycosylation is found at serine 74, serine 86, serine 93, serine 94, serine 97, serine 100, serine 112, serine 113, serine 116, serine 119, serine 124, serine 131, serine 132, and serine 135. A run of 12 repeats spans residues 82 to 100, 101 to 119, 120 to 138, 139 to 157, 158 to 176, 177 to 195, 196 to 214, 215 to 233, 234 to 251, 252 to 270, 271 to 289, and 290 to 308. The tract at residues 82-308 is 12 X 19 AA approximate repeats; the sequence is TTINSGGKQY…QVEAGGSASK (227 aa). The span at 110-123 shows a compositional bias: polar residues; sequence HVSSGGSATSSTIN. Residues 110–146 form a disordered region; sequence HVSSGGSATSSTINSGGHQHVSSGGSATNTTVNNGGR. Residues 124–135 show a composition bias toward low complexity; it reads SGGHQHVSSGGS. Over residues 136-146 the composition is skewed to polar residues; the sequence is ATNTTVNNGGR. 21 O-alpha-linked (D-glycero-D-manno-heptose) serine glycosylation sites follow: serine 151, serine 154, serine 162, serine 170, serine 176, serine 181, serine 188, serine 189, serine 200, serine 226, serine 227, serine 230, serine 238, serine 248, serine 263, serine 264, serine 275, serine 294, serine 305, serine 313, and serine 322. Residues 623 to 686 form a disordered region; the sequence is WYLKADTPPP…GTSSSPVRRT (64 aa). Positions 629 to 638 are enriched in pro residues; that stretch reads TPPPVTPPTN. Repeat copies occupy residues 639–643, 644–648, 649–653, 654–658, 659–663, 664–668, 669–673, and 674–678. The segment covering 639 to 667 has biased composition (low complexity); it reads PDADNPDAGNPDAGNPDAGNPDAGNPDAG. Residues 639–678 form an 8 X 5 AA repeats of P-[DG]-[AGT]-[DGA]-[NKT] region; sequence PDADNPDAGNPDAGNPDAGNPDAGNPDAGKPGTGKPDAGT. An Autotransporter domain is found at 721-989; it reads NTRAPGGVWG…TGGVGFRINF (269 aa).

Homohexamer. Glycosylated by TibC. Glycosylation is required for adhesion to and invasion of host cells. Glycosylation is dispensable for bacterial autoaggregation and biofilm formation.

The protein localises to the cell outer membrane. Mediates both adhesion to and invasion of human intestine epithelial cells. Also mediates bacterial cell aggregation via intercellular TibA-TibA interaction. Enhances biofilm formation. The sequence is that of Autotransporter adhesin/invasin TibA from Escherichia coli O78:H11 (strain H10407 / ETEC).